The chain runs to 260 residues: Indole-3-glycerol phosphate synthase (260 aa).

It belongs to the TrpC family.

It catalyses the reaction 1-(2-carboxyphenylamino)-1-deoxy-D-ribulose 5-phosphate + H(+) = (1S,2R)-1-C-(indol-3-yl)glycerol 3-phosphate + CO2 + H2O. Its pathway is amino-acid biosynthesis; L-tryptophan biosynthesis; L-tryptophan from chorismate: step 4/5. The chain is Indole-3-glycerol phosphate synthase from Chloroherpeton thalassium (strain ATCC 35110 / GB-78).